Consider the following 330-residue polypeptide: tRNA uridine(34) hydroxylase (330 aa).

Positions 123 to 217 (SDPETILVDT…YLEEVPKEES (95 aa)) constitute a Rhodanese domain. Residue Cys177 is the Cysteine persulfide intermediate of the active site. The tract at residues 310–330 (LNKQQKQQAKEIARKKAKSEI) is disordered. Residues 317–330 (QAKEIARKKAKSEI) show a composition bias toward basic and acidic residues.

This sequence belongs to the TrhO family.

The catalysed reaction is uridine(34) in tRNA + AH2 + O2 = 5-hydroxyuridine(34) in tRNA + A + H2O. Its function is as follows. Catalyzes oxygen-dependent 5-hydroxyuridine (ho5U) modification at position 34 in tRNAs. The protein is tRNA uridine(34) hydroxylase of Francisella philomiragia subsp. philomiragia (strain ATCC 25017 / CCUG 19701 / FSC 153 / O#319-036).